The primary structure comprises 192 residues: Ion-translocating oxidoreductase complex subunit B (192 aa).

A hydrophobic region spans residues 1–26 (MNAIWIAVAAVSLLGLAFGAILGYAS). The region spanning 32–91 (EDDPVVEKIDEILPQSQCGQCGYPGCRPYAEAISCNGEKINRCAPGGEAVMLKIAELLNV) is the 4Fe-4S domain. [4Fe-4S] cluster contacts are provided by cysteine 49, cysteine 52, cysteine 57, cysteine 74, cysteine 117, cysteine 120, cysteine 123, cysteine 127, cysteine 147, cysteine 150, cysteine 153, and cysteine 157. 4Fe-4S ferredoxin-type domains lie at 108–137 (MVAV…GATR) and 138–167 (AMHT…LQPV).

This sequence belongs to the 4Fe4S bacterial-type ferredoxin family. RnfB subfamily. In terms of assembly, the complex is composed of six subunits: RsxA, RsxB, RsxC, RsxD, RsxE and RsxG. It depends on [4Fe-4S] cluster as a cofactor.

The protein localises to the cell inner membrane. In terms of biological role, part of a membrane-bound complex that couples electron transfer with translocation of ions across the membrane. Required to maintain the reduced state of SoxR. The polypeptide is Ion-translocating oxidoreductase complex subunit B (Escherichia coli O8 (strain IAI1)).